Here is a 182-residue protein sequence, read N- to C-terminus: Coiled-coil domain-containing protein 32 (182 aa).

Residues 1–10 are compositionally biased toward basic and acidic residues; sequence MMIDDFETHA. Disordered regions lie at residues 1–61 and 153–182; these read MMID…FSPW and PTQN…SPEK. The segment covering 153 to 167 has biased composition (polar residues); that stretch reads PTQNSETPASSSQTD. Residues 172-182 are compositionally biased toward acidic residues; the sequence is EEEEECPSPEK.

In terms of assembly, associates with adaptor protein complex 2 (AP-2).

It is found in the membrane. It localises to the coated pit. In terms of biological role, regulates clathrin-mediated endocytsois of cargos such as transferrin probably through the association and modulation of adaptor protein complex 2 (AP-2). Has a role in ciliogenesis and is required for proper cephalic and left/right axis development. The polypeptide is Coiled-coil domain-containing protein 32 (Danio rerio (Zebrafish)).